Consider the following 304-residue polypeptide: UDP-N-acetylenolpyruvoylglucosamine reductase (304 aa).

The FAD-binding PCMH-type domain maps to 33–198 (RVGGPVDILL…ITATFCFESG (166 aa)). Arg177 is a catalytic residue. The Proton donor role is filled by Ser227. Residue Glu297 is part of the active site.

It belongs to the MurB family. FAD is required as a cofactor.

It is found in the cytoplasm. It catalyses the reaction UDP-N-acetyl-alpha-D-muramate + NADP(+) = UDP-N-acetyl-3-O-(1-carboxyvinyl)-alpha-D-glucosamine + NADPH + H(+). The protein operates within cell wall biogenesis; peptidoglycan biosynthesis. Cell wall formation. The polypeptide is UDP-N-acetylenolpyruvoylglucosamine reductase (Clostridium botulinum (strain Alaska E43 / Type E3)).